Here is a 436-residue protein sequence, read N- to C-terminus: UPF0597 protein YhaM (436 aa).

It belongs to the UPF0597 family.

This is UPF0597 protein YhaM from Shigella boydii serotype 18 (strain CDC 3083-94 / BS512).